The following is a 350-amino-acid chain: ALA-interacting subunit 5 (350 aa).

A disordered region spans residues 1–23; the sequence is MSSTAASSTVGGGGSSEISGVKK. S2 carries the post-translational modification N-acetylserine. A helical transmembrane segment spans residues 50-70; the sequence is VILTFLVAGVVFIPLGVICLF. Residues N181 and N231 are each glycosylated (N-linked (GlcNAc...) asparagine). The helical transmembrane segment at 304–324 threads the bilayer; it reads FLGIAYLTVGSICLFLAVTFA.

This sequence belongs to the CDC50/LEM3 family. In terms of assembly, interacts with ALA2 and ALA3 in a heterologous system. In terms of tissue distribution, expressed in roots, leaves, stems, flowers and siliques.

It localises to the golgi apparatus membrane. Its subcellular location is the prevacuolar compartment membrane. The protein localises to the endoplasmic reticulum membrane. Required for the lipid transport activity of the ALA/ALIS P4-ATPase complex. The polypeptide is ALA-interacting subunit 5 (ALIS5) (Arabidopsis thaliana (Mouse-ear cress)).